Reading from the N-terminus, the 433-residue chain is Homogentisate 1,2-dioxygenase (433 aa).

Residue H288 is the Proton acceptor of the active site. H331 and E337 together coordinate Fe cation. Residues Y346 and H367 each coordinate homogentisate. Position 367 (H367) interacts with Fe cation.

This sequence belongs to the homogentisate dioxygenase family. Hexamer; dimer of trimers. Requires Fe cation as cofactor.

The enzyme catalyses homogentisate + O2 = 4-maleylacetoacetate + H(+). Its pathway is amino-acid degradation; L-phenylalanine degradation; acetoacetate and fumarate from L-phenylalanine: step 4/6. Its function is as follows. Involved in the catabolism of homogentisate (2,5-dihydroxyphenylacetate or 2,5-OH-PhAc), a central intermediate in the degradation of phenylalanine and tyrosine. Catalyzes the oxidative ring cleavage of the aromatic ring of homogentisate to yield maleylacetoacetate. The polypeptide is Homogentisate 1,2-dioxygenase (Pseudomonas putida (strain GB-1)).